A 386-amino-acid polypeptide reads, in one-letter code: 2-deoxy-scyllo-inosose synthase (386 aa).

Residues D42, 73–76 (EEHK), 105–109 (GVTGN), 129–130 (TT), 140–142 (SLK), and 151–152 (KN) contribute to the NAD(+) site. The active site involves K142. Position 184 (E184) interacts with Co(2+). Residue E244 is part of the active site. The Co(2+) site is built by H247 and H263.

This sequence belongs to the sugar phosphate cyclases superfamily. DOI synthase family. NAD(+) is required as a cofactor. It depends on Co(2+) as a cofactor.

The enzyme catalyses D-glucose 6-phosphate = 2-deoxy-L-scyllo-inosose + phosphate. Its pathway is metabolic intermediate biosynthesis; 2-deoxystreptamine biosynthesis; 2-deoxystreptamine from D-glucose 6-phosphate: step 1/4. The protein operates within antibiotic biosynthesis; tobramycin biosynthesis. Its function is as follows. Catalyzes the intramolecular carbocycle formation from D-glucose-6-phosphate to 2-deoxy-scyllo-inosose (DOI). This Streptoalloteichus tenebrarius (strain ATCC 17920 / DSM 40477 / JCM 4838 / CBS 697.72 / NBRC 16177 / NCIMB 11028 / NRRL B-12390 / A12253. 1 / ISP 5477) (Streptomyces tenebrarius) protein is 2-deoxy-scyllo-inosose synthase (tbmA).